The chain runs to 379 residues: Class V chitinase (379 aa).

The first 24 residues, 1 to 24 (MSSTKLISLIVSITFFLTLQCSMA), serve as a signal peptide directing secretion. One can recognise a GH18 domain in the interval 27–369 (VVKASYWFPA…RAASQAWDAT (343 aa)). Position 99 (Gly-99) interacts with chitin. Residue Glu-140 is the Proton donor of the active site. Chitin is bound at residue Tyr-259. N-linked (GlcNAc...) asparagine glycans are attached at residues Asn-307 and Asn-327. Trp-348 is a chitin binding site.

It belongs to the glycosyl hydrolase 18 family. Chitinase class V subfamily.

The catalysed reaction is Random endo-hydrolysis of N-acetyl-beta-D-glucosaminide (1-&gt;4)-beta-linkages in chitin and chitodextrins.. It catalyses the reaction Hydrolysis of N,N'-diacetylchitobiose from the non-reducing end of chitin and chitodextrins.. It participates in glycan degradation; chitin degradation. Can hydrolyze glycol chitin and chitin oligosaccharides (e.g. N-acetylglucosamine) (GlcNAc)4, (GlcNAc)5 and (GlcNAc)6. Hydrolyzes N-acetylglucosamine oligomers producing dimers from the non-reducing end of the substrates. The chain is Class V chitinase from Arabidopsis thaliana (Mouse-ear cress).